We begin with the raw amino-acid sequence, 230 residues long: Ribose-5-phosphate isomerase A (230 aa).

Residues 31–34, 88–91, and 101–104 each bind substrate; these read TGST, DGSD, and KGGG. The Proton acceptor role is filled by glutamate 110. Lysine 128 lines the substrate pocket.

This sequence belongs to the ribose 5-phosphate isomerase family. Homodimer.

The enzyme catalyses aldehydo-D-ribose 5-phosphate = D-ribulose 5-phosphate. It functions in the pathway carbohydrate degradation; pentose phosphate pathway; D-ribose 5-phosphate from D-ribulose 5-phosphate (non-oxidative stage): step 1/1. In terms of biological role, catalyzes the reversible conversion of ribose-5-phosphate to ribulose 5-phosphate. This is Ribose-5-phosphate isomerase A from Lactobacillus acidophilus (strain ATCC 700396 / NCK56 / N2 / NCFM).